A 335-amino-acid polypeptide reads, in one-letter code: D-alanine--D-alanine ligase (335 aa).

The ATP-grasp domain occupies 124–329; the sequence is KMWFSALGVP…FTHYLYSNIK (206 aa). 154–209 serves as a coordination point for ATP; sequence ALENWGSIFIKAASQGSSVGCYRVDSQDELVSSLEQAFSFSPYVIVEKTINARELE. Residues aspartate 283, glutamate 296, and asparagine 298 each coordinate Mg(2+).

The protein belongs to the D-alanine--D-alanine ligase family. Requires Mg(2+) as cofactor. The cofactor is Mn(2+).

The protein localises to the cytoplasm. The catalysed reaction is 2 D-alanine + ATP = D-alanyl-D-alanine + ADP + phosphate + H(+). It functions in the pathway cell wall biogenesis; peptidoglycan biosynthesis. In terms of biological role, cell wall formation. This is D-alanine--D-alanine ligase from Shewanella woodyi (strain ATCC 51908 / MS32).